A 147-amino-acid polypeptide reads, in one-letter code: UPF0306 protein YPK_3704 (147 aa).

It belongs to the UPF0306 family.

In Yersinia pseudotuberculosis serotype O:3 (strain YPIII), this protein is UPF0306 protein YPK_3704.